A 379-amino-acid chain; its full sequence is Chaperone protein DnaJ (379 aa).

In terms of domain architecture, J spans 5–70 (DYYEVLGVAK…QKRAAYDQYG (66 aa)). The segment at 139-217 (GYDTQIRVPS…CHGAGKVKET (79 aa)) adopts a CR-type zinc-finger fold. Residues Cys-152, Cys-155, Cys-169, Cys-172, Cys-191, Cys-194, Cys-205, and Cys-208 each contribute to the Zn(2+) site. CXXCXGXG motif repeat units follow at residues 152-159 (CEICHGSG), 169-176 (CPTCSGSG), 191-198 (CPKCHGTG), and 205-212 (CGHCHGAG).

It belongs to the DnaJ family. In terms of assembly, homodimer. Zn(2+) is required as a cofactor.

Its subcellular location is the cytoplasm. Functionally, participates actively in the response to hyperosmotic and heat shock by preventing the aggregation of stress-denatured proteins and by disaggregating proteins, also in an autonomous, DnaK-independent fashion. Unfolded proteins bind initially to DnaJ; upon interaction with the DnaJ-bound protein, DnaK hydrolyzes its bound ATP, resulting in the formation of a stable complex. GrpE releases ADP from DnaK; ATP binding to DnaK triggers the release of the substrate protein, thus completing the reaction cycle. Several rounds of ATP-dependent interactions between DnaJ, DnaK and GrpE are required for fully efficient folding. Also involved, together with DnaK and GrpE, in the DNA replication of plasmids through activation of initiation proteins. The chain is Chaperone protein DnaJ from Paraburkholderia phytofirmans (strain DSM 17436 / LMG 22146 / PsJN) (Burkholderia phytofirmans).